Here is a 620-residue protein sequence, read N- to C-terminus: MYND-type zinc finger protein MUB1 (620 aa).

The segment at 514–555 (NFSCGKWEDFPRQFAKCRRCKRTKYCSRKCQLKAWGYHRYWC) adopts an MYND-type; degenerate zinc-finger fold. Zn(2+) is bound by residues Cys530, Cys533, His551, and Cys555. A compositionally biased stretch (polar residues) spans 563 to 606 (MRSTNTTTGVNTPNEPSSLNATATTAADVSNSTSTFTPNISTTV). The tract at residues 563 to 620 (MRSTNTTTGVNTPNEPSSLNATATTAADVSNSTSTFTPNISTTVPDEISNRDENSIPE) is disordered. Basic and acidic residues predominate over residues 610 to 620 (ISNRDENSIPE).

The protein belongs to the MUB1/samB family. Interacts with UBR2 and RPN4.

It is found in the cytoplasm. Functionally, involved in the determination of the onset of polarized growth. Required for the ubiquitin-dependent degradation of RPN4. Cooperates with UBR2 to transfer ubiquitin from RAD6 to RPN4. The sequence is that of MYND-type zinc finger protein MUB1 (MUB1) from Saccharomyces cerevisiae (strain ATCC 204508 / S288c) (Baker's yeast).